Reading from the N-terminus, the 390-residue chain is GTPase Obg (390 aa).

The region spanning 1 to 159 is the Obg domain; the sequence is MKFVDEASIL…RELLLELMLL (159 aa). Residues 127-147 are disordered; the sequence is NTRFKSSVNRTPRQKTNGTPG. Over residues 129-145 the composition is skewed to polar residues; sequence RFKSSVNRTPRQKTNGT. The 174-residue stretch at 160-333 folds into the OBG-type G domain; it reads ADVGMLGMPN…LCWDVMTFII (174 aa). GTP-binding positions include 166-173, 191-195, 213-216, 283-286, and 314-316; these read GMPNAGKS, FTTLV, DIPG, NKID, and SAA. Mg(2+) is bound by residues Ser173 and Thr193.

It belongs to the TRAFAC class OBG-HflX-like GTPase superfamily. OBG GTPase family. In terms of assembly, monomer. Mg(2+) is required as a cofactor.

Its subcellular location is the cytoplasm. Its function is as follows. An essential GTPase which binds GTP, GDP and possibly (p)ppGpp with moderate affinity, with high nucleotide exchange rates and a fairly low GTP hydrolysis rate. Plays a role in control of the cell cycle, stress response, ribosome biogenesis and in those bacteria that undergo differentiation, in morphogenesis control. The polypeptide is GTPase Obg (Shigella dysenteriae serotype 1 (strain Sd197)).